The following is a 430-amino-acid chain: Bystin (430 aa).

Composition is skewed to basic residues over residues 1 to 12 (MGKDKKDRKHKG) and 26 to 35 (PSKRVKHRRE). Disordered regions lie at residues 1-45 (MGKD…ESFV) and 65-113 (MEEY…SETY). Residues 68–78 (YGFRKTGDRKT) show a composition bias toward basic and acidic residues. Positions 93–104 (RIDDDDEDDSDD) are enriched in acidic residues.

It belongs to the bystin family.

The protein resides in the nucleus. It localises to the nucleolus. Its function is as follows. Required for processing of 20S pre-rRNA precursor and biogenesis of 40S ribosomal subunits. The chain is Bystin (bysl) from Nematostella vectensis (Starlet sea anemone).